The following is a 394-amino-acid chain: Elongation factor Tu (394 aa).

Residues 10 to 204 (KPHVNVGTIG…AVDSYIPQPE (195 aa)) form the tr-type G domain. The segment at 19 to 26 (GHVDHGKT) is G1. Residue 19-26 (GHVDHGKT) participates in GTP binding. Mg(2+) is bound at residue T26. The segment at 60-64 (GITIS) is G2. Residues 81 to 84 (DCPG) are G3. Residues 81–85 (DCPGH) and 136–139 (NKCD) each bind GTP. The G4 stretch occupies residues 136–139 (NKCD). A G5 region spans residues 174–176 (SAV).

It belongs to the TRAFAC class translation factor GTPase superfamily. Classic translation factor GTPase family. EF-Tu/EF-1A subfamily. In terms of assembly, monomer.

Its subcellular location is the cytoplasm. The catalysed reaction is GTP + H2O = GDP + phosphate + H(+). Functionally, GTP hydrolase that promotes the GTP-dependent binding of aminoacyl-tRNA to the A-site of ribosomes during protein biosynthesis. This is Elongation factor Tu from Akkermansia muciniphila (strain ATCC BAA-835 / DSM 22959 / JCM 33894 / BCRC 81048 / CCUG 64013 / CIP 107961 / Muc).